The sequence spans 779 residues: Endonuclease MutS2 (779 aa).

328-335 (GPNTGGKT) contributes to the ATP binding site. In terms of domain architecture, Smr spans 704 to 779 (LDLRGKRYEE…GSGATIVTLG (76 aa)).

It belongs to the DNA mismatch repair MutS family. MutS2 subfamily. As to quaternary structure, homodimer. Binds to stalled ribosomes, contacting rRNA.

Endonuclease that is involved in the suppression of homologous recombination and thus may have a key role in the control of bacterial genetic diversity. In terms of biological role, acts as a ribosome collision sensor, splitting the ribosome into its 2 subunits. Detects stalled/collided 70S ribosomes which it binds and splits by an ATP-hydrolysis driven conformational change. Acts upstream of the ribosome quality control system (RQC), a ribosome-associated complex that mediates the extraction of incompletely synthesized nascent chains from stalled ribosomes and their subsequent degradation. Probably generates substrates for RQC. This chain is Endonuclease MutS2, found in Streptococcus agalactiae serotype III (strain NEM316).